The primary structure comprises 91 residues: Protein xpaR7 (91 aa).

The protein is Protein xpaR7 (xpaR7) of Bacillus licheniformis.